The chain runs to 86 residues: Large ribosomal subunit protein bL27 (86 aa).

The interval 1–26 (MATKKAGGSSRNGRDSAGRRLGVKQS) is disordered.

It belongs to the bacterial ribosomal protein bL27 family.

The polypeptide is Large ribosomal subunit protein bL27 (Rickettsia canadensis (strain McKiel)).